Here is a 253-residue protein sequence, read N- to C-terminus: ATP synthase subunit b 1 (253 aa).

The chain crosses the membrane as a helical span at residues 5–27 (GWTVALQAVNFLILVLLLRHFLY).

This sequence belongs to the ATPase B chain family. In terms of assembly, F-type ATPases have 2 components, F(1) - the catalytic core - and F(0) - the membrane proton channel. F(1) has five subunits: alpha(3), beta(3), gamma(1), delta(1), epsilon(1). F(0) has three main subunits: a(1), b(2) and c(10-14). The alpha and beta chains form an alternating ring which encloses part of the gamma chain. F(1) is attached to F(0) by a central stalk formed by the gamma and epsilon chains, while a peripheral stalk is formed by the delta and b chains.

The protein resides in the cell inner membrane. Functionally, f(1)F(0) ATP synthase produces ATP from ADP in the presence of a proton or sodium gradient. F-type ATPases consist of two structural domains, F(1) containing the extramembraneous catalytic core and F(0) containing the membrane proton channel, linked together by a central stalk and a peripheral stalk. During catalysis, ATP synthesis in the catalytic domain of F(1) is coupled via a rotary mechanism of the central stalk subunits to proton translocation. In terms of biological role, component of the F(0) channel, it forms part of the peripheral stalk, linking F(1) to F(0). This Rhodospirillum centenum (strain ATCC 51521 / SW) protein is ATP synthase subunit b 1.